The sequence spans 177 residues: Large ribosomal subunit protein uL6 (177 aa).

Belongs to the universal ribosomal protein uL6 family. As to quaternary structure, part of the 50S ribosomal subunit.

Functionally, this protein binds to the 23S rRNA, and is important in its secondary structure. It is located near the subunit interface in the base of the L7/L12 stalk, and near the tRNA binding site of the peptidyltransferase center. This is Large ribosomal subunit protein uL6 from Thioalkalivibrio sulfidiphilus (strain HL-EbGR7).